A 263-amino-acid polypeptide reads, in one-letter code: Small ribosomal subunit protein eS1 (263 aa).

Residues 235-263 (HGEGGGGKGEAGDKSERPEGYEPPVQESV) are disordered. Residues 244-254 (EAGDKSERPEG) show a composition bias toward basic and acidic residues.

This sequence belongs to the eukaryotic ribosomal protein eS1 family. Component of the small ribosomal subunit. Mature ribosomes consist of a small (40S) and a large (60S) subunit. The 40S subunit contains about 33 different proteins and 1 molecule of RNA (18S). The 60S subunit contains about 49 different proteins and 3 molecules of RNA (28S, 5.8S and 5S).

The protein localises to the cytoplasm. The sequence is that of Small ribosomal subunit protein eS1 from Bombyx mori (Silk moth).